A 212-amino-acid polypeptide reads, in one-letter code: Guanylate kinase (212 aa).

The Guanylate kinase-like domain maps to 7–187 (GLLIVLSGPS…AADRIIAIIR (181 aa)). Residue 14–21 (GPSGVGKA) participates in ATP binding.

It belongs to the guanylate kinase family.

Its subcellular location is the cytoplasm. It catalyses the reaction GMP + ATP = GDP + ADP. Functionally, essential for recycling GMP and indirectly, cGMP. In Onion yellows phytoplasma (strain OY-M), this protein is Guanylate kinase.